The chain runs to 92 residues: Small ribosomal subunit protein uS19c (92 aa).

The protein belongs to the universal ribosomal protein uS19 family.

It is found in the plastid. Its subcellular location is the chloroplast. Protein S19 forms a complex with S13 that binds strongly to the 16S ribosomal RNA. The chain is Small ribosomal subunit protein uS19c (rps19) from Pinus thunbergii (Japanese black pine).